Consider the following 201-residue polypeptide: MSSSRQAEIKRKTNETDISIFINIDGNGISEIDTGIPFLDHMLHQISSHGLFDLKIRAIGDTHIDDHHTNEDVGIALGKAFTKALGERKGINRFGHFFAPLDEALVQVTLDCSGRPHLSYGLKLKAPRIGNYDTELVREFFIAFVNSSGITLHINQIEGRNSHHIVEACFKAFSRSMRMATEIDLRRSGTIPSSKGMLEID.

The protein belongs to the imidazoleglycerol-phosphate dehydratase family.

It localises to the cytoplasm. It carries out the reaction D-erythro-1-(imidazol-4-yl)glycerol 3-phosphate = 3-(imidazol-4-yl)-2-oxopropyl phosphate + H2O. It participates in amino-acid biosynthesis; L-histidine biosynthesis; L-histidine from 5-phospho-alpha-D-ribose 1-diphosphate: step 6/9. In Prochlorococcus marinus (strain MIT 9515), this protein is Imidazoleglycerol-phosphate dehydratase.